A 352-amino-acid chain; its full sequence is MKMTFRWYGDTDPVPLAYIRQIPGMVGVVSAIYDVPVGEVWPIDRIRSLKEKIEAHGLTLEVIESVPVHEDIKLGKPTRDTLIVNYGQTLRNLGACGVKVVCYNFMPVFDWTRTSLEMPLPDGSTTLAFDTQAIRELDVSEGIQLPGWDASYRPEQLKALLRDYEALDEAGLWANLDYFLRAIIPVAKEAGIKMAIHPDDPPRPIFGLPRIVKNRADLQRVLDIVDDPANGLTLCSGSLGADLQNDIPALVREFGARGRIHFAHLRNVQTNAAGDFHETSHRSADGSLDMAEIVKAYFETGFEGYARPDHGRMIWGETGRAGYGLFDRALGAVYLNGIWEGLAKHPADHAAE.

Belongs to the mannonate dehydratase family. Fe(2+) is required as a cofactor. Requires Mn(2+) as cofactor.

It catalyses the reaction D-mannonate = 2-dehydro-3-deoxy-D-gluconate + H2O. It functions in the pathway carbohydrate metabolism; pentose and glucuronate interconversion. Functionally, catalyzes the dehydration of D-mannonate. The protein is Mannonate dehydratase of Paraburkholderia phytofirmans (strain DSM 17436 / LMG 22146 / PsJN) (Burkholderia phytofirmans).